Here is a 186-residue protein sequence, read N- to C-terminus: Probable calcium-binding protein CML25 (186 aa).

The segment covering 1-17 (MFNKNQGSNGGSSSNVG) has biased composition (low complexity). A disordered region spans residues 1 to 23 (MFNKNQGSNGGSSSNVGIGADSP). 4 consecutive EF-hand domains span residues 33 to 68 (TEIRELEAVFKKFDVNGDGKISSKELGAIMTSLGHE), 69 to 104 (VPEEELEKAITEIDRKGDGYINFEEFVELNTKGMDQ), 106 to 141 (DVLENLKDAFSVYDIDGNGSISAEELHEVLRSLGDE), and 142 to 177 (CSIAECRKMIGGVDKDGDGTIDFEEFKIMMTMGSRR). Aspartate 46, asparagine 48, aspartate 50, lysine 52, and glutamate 57 together coordinate Ca(2+). Ca(2+) is bound by residues aspartate 119, aspartate 121, asparagine 123, serine 125, glutamate 130, aspartate 155, aspartate 157, aspartate 159, threonine 161, and glutamate 166.

In terms of biological role, potential calcium sensor. This Arabidopsis thaliana (Mouse-ear cress) protein is Probable calcium-binding protein CML25 (CML25).